A 624-amino-acid chain; its full sequence is ADP,ATP carrier protein 1, chloroplastic (624 aa).

A chloroplast-targeting transit peptide spans 1-79; sequence MEAVIQTRGL…KERSTEFICK (79 aa). Position 80 is an N-acetylalanine (alanine 80). Transmembrane regions (helical) follow at residues 108–128, 182–202, 240–260, 315–335, 446–466, and 545–565; these read VEVA…CILF, ALFY…GFVM, LFYV…FWGF, AMMS…WWVN, LLTG…APLV, and LANS…AWLA. The segment at 579–624 is disordered; sequence SEEELEKEMERASSVKIPVVSQDESGNGSLGESPSSSPEKSAPTNL. Residues 602-624 show a composition bias toward low complexity; that stretch reads ESGNGSLGESPSSSPEKSAPTNL.

It belongs to the ADP/ATP translocase tlc (TC 2.A.12.2) family.

The protein resides in the plastid. Its subcellular location is the chloroplast membrane. Functionally, may function as an ATP importer. In Arabidopsis thaliana (Mouse-ear cress), this protein is ADP,ATP carrier protein 1, chloroplastic (AATP1).